Reading from the N-terminus, the 189-residue chain is GTPase HRas (189 aa).

GTP is bound at residue 10–17 (GARGVGKS). Positions 32–40 (YDPTIEDSY) match the Effector region motif. GTP contacts are provided by residues 57–61 (DTAGQ) and 116–119 (NKCD). 2 S-palmitoyl cysteine; by host lipidation sites follow: Cys-181 and Cys-184. Cysteine methyl ester; by host is present on Cys-186. Cys-186 carries the S-farnesyl cysteine; by host lipid modification. The propeptide at 187–189 (VLS) is removed in mature form.

Belongs to the small GTPase superfamily. Ras family.

The protein localises to the host cell membrane. The catalysed reaction is GTP + H2O = GDP + phosphate + H(+). With respect to regulation, alternates between an inactive form bound to GDP and an active form bound to GTP. Activated by a guanine nucleotide-exchange factor (GEF) and inactivated by a GTPase-activating protein (GAP). In Mus musculus (Mouse), this protein is GTPase HRas (H-RAS).